Here is a 513-residue protein sequence, read N- to C-terminus: 2-isopropylmalate synthase (513 aa).

The Pyruvate carboxyltransferase domain maps to 4-266; that stretch reads IEFFDTSLRD…QSPLKLSETA (263 aa). Residues Asp13, His201, His203, and Asn237 each contribute to the Mn(2+) site. The regulatory domain stretch occupies residues 390–513; it reads ILDNVQIDGH…VEQISAHDGI (124 aa).

Belongs to the alpha-IPM synthase/homocitrate synthase family. LeuA type 1 subfamily. In terms of assembly, homodimer. Requires Mn(2+) as cofactor.

It localises to the cytoplasm. It carries out the reaction 3-methyl-2-oxobutanoate + acetyl-CoA + H2O = (2S)-2-isopropylmalate + CoA + H(+). The protein operates within amino-acid biosynthesis; L-leucine biosynthesis; L-leucine from 3-methyl-2-oxobutanoate: step 1/4. In terms of biological role, catalyzes the condensation of the acetyl group of acetyl-CoA with 3-methyl-2-oxobutanoate (2-ketoisovalerate) to form 3-carboxy-3-hydroxy-4-methylpentanoate (2-isopropylmalate). The sequence is that of 2-isopropylmalate synthase from Lactococcus lactis subsp. lactis (strain IL1403) (Streptococcus lactis).